Here is a 285-residue protein sequence, read N- to C-terminus: MKKFCIIANRDKDENLTITQTMLEFLEANGKTVYVTEESCLEGSYTDVSGIPKDVECAIVLGGDGTILQAAHDLLQLDIPILGVNLGTLGFLAEIETLTMKQAFSKLFLNQYNIESRMMIDATVFKEGQSLSSHKVSAINDVVITRSGFSRIIGVSIFINGEVVQNYRGDGVIISTPTGSTGYNLSAGGPIVTPKAEMIMITPICPHSLNARSIIVTSDDTVEIQIRESKKTQEEEAIVTVDGSFSMELQANDRILIKKAKERVKLVRLEGHSFFHLLRTKFGDK.

Aspartate 64 serves as the catalytic Proton acceptor. NAD(+)-binding positions include 64–65, 140–141, arginine 151, arginine 168, aspartate 170, and 181–186; these read DG, ND, and TGYNLS.

The protein belongs to the NAD kinase family. It depends on a divalent metal cation as a cofactor.

It localises to the cytoplasm. The enzyme catalyses NAD(+) + ATP = ADP + NADP(+) + H(+). Its function is as follows. Involved in the regulation of the intracellular balance of NAD and NADP, and is a key enzyme in the biosynthesis of NADP. Catalyzes specifically the phosphorylation on 2'-hydroxyl of the adenosine moiety of NAD to yield NADP. This Lachnoclostridium phytofermentans (strain ATCC 700394 / DSM 18823 / ISDg) (Clostridium phytofermentans) protein is NAD kinase.